The primary structure comprises 214 residues: Large ribosomal subunit protein bL25 (214 aa).

Residues 194–214 (TTEAEETAEPEVIRRKEEEEE) form a disordered region. Positions 204 to 214 (EVIRRKEEEEE) are enriched in basic and acidic residues.

This sequence belongs to the bacterial ribosomal protein bL25 family. CTC subfamily. In terms of assembly, part of the 50S ribosomal subunit; part of the 5S rRNA/L5/L18/L25 subcomplex. Contacts the 5S rRNA. Binds to the 5S rRNA independently of L5 and L18.

This is one of the proteins that binds to the 5S RNA in the ribosome where it forms part of the central protuberance. The sequence is that of Large ribosomal subunit protein bL25 from Thermotoga petrophila (strain ATCC BAA-488 / DSM 13995 / JCM 10881 / RKU-1).